A 132-amino-acid polypeptide reads, in one-letter code: Small ribosomal subunit protein uS8 (132 aa).

The protein belongs to the universal ribosomal protein uS8 family. In terms of assembly, part of the 30S ribosomal subunit. Contacts proteins S5 and S12.

Its function is as follows. One of the primary rRNA binding proteins, it binds directly to 16S rRNA central domain where it helps coordinate assembly of the platform of the 30S subunit. This is Small ribosomal subunit protein uS8 from Parvibaculum lavamentivorans (strain DS-1 / DSM 13023 / NCIMB 13966).